Here is an 84-residue protein sequence, read N- to C-terminus: Peptide Ctry2346 (84 aa).

The first 23 residues, 1–23 (MKTQTLLFTFSLVLLMVATQTEA), serve as a signal peptide directing secretion. Leu33 is subject to Leucine amide. The propeptide occupies 37–84 (GLLDNLLGKRGLLFGKRALTNQDLFDLAYDPSLSAADMDALEMLLENY).

Belongs to the non-disulfide-bridged peptide (NDBP) superfamily. Short antimicrobial peptide (group 4) family. In terms of tissue distribution, expressed by the venom gland.

Its subcellular location is the secreted. The protein localises to the target cell membrane. Its function is as follows. Antimicrobial peptide. In Chaerilus tryznai (Scorpion), this protein is Peptide Ctry2346.